Consider the following 448-residue polypeptide: Protein king tubby (448 aa).

Positions H103 to D195 are disordered. Low complexity predominate over residues Q118 to Q133. A Phosphoserine modification is found at S141. A compositionally biased stretch (gly residues) spans N182–E191.

This sequence belongs to the TUB family.

Its subcellular location is the cytoplasm. It localises to the nucleus. It is found in the cell projection. The protein localises to the cilium membrane. The protein resides in the rhabdomere. This Drosophila erecta (Fruit fly) protein is Protein king tubby.